A 346-amino-acid chain; its full sequence is Peroxidase 38 (346 aa).

Residues 1–22 form the signal peptide; the sequence is MHSSLIKLGFLLLLLQVSLSHA. The residue at position 23 (Gln-23) is a Pyrrolidone carboxylic acid. 4 disulfides stabilise this stretch: Cys-33/Cys-113, Cys-66/Cys-71, Cys-119/Cys-323, and Cys-199/Cys-231. The active-site Proton acceptor is the His-64. Ca(2+) contacts are provided by Asp-65, Val-68, Gly-70, Asp-72, and Ser-74. N-linked (GlcNAc...) asparagine glycosylation occurs at Asn-79. Pro-161 contacts substrate. Residue His-192 participates in heme b binding. Position 193 (Thr-193) interacts with Ca(2+). Residue Asn-236 is glycosylated (N-linked (GlcNAc...) asparagine). Residues Asp-244, Thr-247, and Asp-252 each contribute to the Ca(2+) site.

The protein belongs to the peroxidase family. Classical plant (class III) peroxidase subfamily. It depends on heme b as a cofactor. The cofactor is Ca(2+).

Its subcellular location is the secreted. It is found in the vacuole. It catalyses the reaction 2 a phenolic donor + H2O2 = 2 a phenolic radical donor + 2 H2O. Functionally, removal of H(2)O(2), oxidation of toxic reductants, biosynthesis and degradation of lignin, suberization, auxin catabolism, response to environmental stresses such as wounding, pathogen attack and oxidative stress. These functions might be dependent on each isozyme/isoform in each plant tissue. The polypeptide is Peroxidase 38 (PER38) (Arabidopsis thaliana (Mouse-ear cress)).